A 413-amino-acid polypeptide reads, in one-letter code: Histidine--tRNA ligase (413 aa).

The protein belongs to the class-II aminoacyl-tRNA synthetase family. Homodimer.

It localises to the cytoplasm. It carries out the reaction tRNA(His) + L-histidine + ATP = L-histidyl-tRNA(His) + AMP + diphosphate + H(+). This chain is Histidine--tRNA ligase, found in Ehrlichia chaffeensis (strain ATCC CRL-10679 / Arkansas).